The primary structure comprises 361 residues: Divinyl chlorophyll a/b light-harvesting protein PcbE (361 aa).

6 helical membrane-spanning segments follow: residues 27–47 (FIGS…ANTL), 88–108 (VAFV…AGLL), 149–169 (FILG…VEWA), 210–230 (VMGG…FHIA), 250–270 (AVLS…AFWC), and 315–335 (LSNV…WHAI).

Belongs to the PsbB/PsbC family. IsiA/Pcb subfamily. As to quaternary structure, the antenna complex consists of divinyl chlorophylls (a and b) and divinyl chlorophyll a/b binding proteins and binds more divinyl chlorophyll b than does the antenna complex from high-light-adapted Prochlorococcus. Divinyl chlorophyll a serves as cofactor. Requires divinyl chlorophyll b as cofactor.

It is found in the cellular thylakoid membrane. The antenna complex functions as a light receptor, it captures and delivers excitation energy to photosystems II and I. The Prochlorales pcb genes are not related to higher plant LHCs. This is Divinyl chlorophyll a/b light-harvesting protein PcbE (pcbE) from Prochlorococcus marinus (strain SARG / CCMP1375 / SS120).